A 429-amino-acid chain; its full sequence is Adenylosuccinate synthetase (429 aa).

GTP contacts are provided by residues 12–18 (GDEGKGK) and 40–42 (GHT). D13 (proton acceptor) is an active-site residue. Positions 13 and 40 each coordinate Mg(2+). IMP contacts are provided by residues 13 to 16 (DEGK), 38 to 41 (NAGH), T127, R141, Q222, T237, and R301. H41 (proton donor) is an active-site residue. 297–303 (ATTGRPR) contacts substrate. GTP is bound by residues R303, 329 to 331 (KLD), and 411 to 413 (SLG).

The protein belongs to the adenylosuccinate synthetase family. In terms of assembly, homodimer. Mg(2+) is required as a cofactor.

Its subcellular location is the cytoplasm. It catalyses the reaction IMP + L-aspartate + GTP = N(6)-(1,2-dicarboxyethyl)-AMP + GDP + phosphate + 2 H(+). It participates in purine metabolism; AMP biosynthesis via de novo pathway; AMP from IMP: step 1/2. Its function is as follows. Plays an important role in the de novo pathway of purine nucleotide biosynthesis. Catalyzes the first committed step in the biosynthesis of AMP from IMP. The sequence is that of Adenylosuccinate synthetase from Endomicrobium trichonymphae.